A 130-amino-acid polypeptide reads, in one-letter code: Small ribosomal subunit protein uS9 (130 aa).

It belongs to the universal ribosomal protein uS9 family.

The chain is Small ribosomal subunit protein uS9 from Clostridioides difficile (strain 630) (Peptoclostridium difficile).